Here is a 67-residue protein sequence, read N- to C-terminus: uncharacterized protein (67 aa).

Residues 12–34 form a helical membrane-spanning segment; it reads YYYAHQTVCITSTGFALCFVVQA.

It is found in the membrane. This is an uncharacterized protein from Saccharomyces cerevisiae (strain ATCC 204508 / S288c) (Baker's yeast).